We begin with the raw amino-acid sequence, 146 residues long: Leptin (146 aa).

An intrachain disulfide couples Cys-96 to Cys-146.

This sequence belongs to the leptin family.

Its subcellular location is the secreted. Functionally, key player in the regulation of energy balance and body weight control. Once released into the circulation, has central and peripheral effects by binding LEPR, found in many tissues, which results in the activation of several major signaling pathways. In the hypothalamus, acts as an appetite-regulating factor that induces a decrease in food intake and an increase in energy consumption by inducing anorexinogenic factors and suppressing orexigenic neuropeptides, also regulates bone mass and secretion of hypothalamo-pituitary-adrenal hormones. In the periphery, increases basal metabolism, influences reproductive function, regulates pancreatic beta-cell function and insulin secretion, is pro-angiogenic for endothelial cell and affects innate and adaptive immunity. In the arcuate nucleus of the hypothalamus, activates by depolarization POMC neurons inducing FOS and SOCS3 expression to release anorexigenic peptides and inhibits by hyperpolarization NPY neurons inducing SOCS3 with a consequent reduction on release of orexigenic peptides. In addition to its known satiety inducing effect, has a modulatory role in nutrient absorption. In the intestine, reduces glucose absorption by enterocytes by activating PKC and leading to a sequential activation of p38, PI3K and ERK signaling pathways which exerts an inhibitory effect on glucose absorption. Acts as a growth factor on certain tissues, through the activation of different signaling pathways increases expression of genes involved in cell cycle regulation such as CCND1, via JAK2-STAT3 pathway, or VEGFA, via MAPK1/3 and PI3K-AKT1 pathways. May also play an apoptotic role via JAK2-STAT3 pathway and up-regulation of BIRC5 expression. Pro-angiogenic, has mitogenic activity on vascular endothelial cells and plays a role in matrix remodeling by regulating the expression of matrix metalloproteinases (MMPs) and tissue inhibitors of metalloproteinases (TIMPs). In innate immunity, modulates the activity and function of neutrophils by increasing chemotaxis and the secretion of oxygen radicals. Increases phagocytosis by macrophages and enhances secretion of pro-inflammatory mediators. Increases cytotoxic ability of NK cells. Plays a pro-inflammatory role, in synergy with IL1B, by inducing NOS2 which promotes the production of IL6, IL8 and Prostaglandin E2, through a signaling pathway that involves JAK2, PI3K, MAP2K1/MEK1 and MAPK14/p38. In adaptive immunity, promotes the switch of memory T-cells towards T helper-1 cell immune responses. Increases CD4(+)CD25(-) T-cell proliferation and reduces autophagy during TCR (T-cell receptor) stimulation, through MTOR signaling pathway activation and BCL2 up-regulation. This is Leptin (LEP) from Pan troglodytes (Chimpanzee).